A 121-amino-acid chain; its full sequence is Large ribosomal subunit protein uL14 (121 aa).

The protein belongs to the universal ribosomal protein uL14 family. As to quaternary structure, part of the 50S ribosomal subunit. Forms a cluster with proteins L3 and L19. In the 70S ribosome, L14 and L19 interact and together make contacts with the 16S rRNA in bridges B5 and B8.

In terms of biological role, binds to 23S rRNA. Forms part of two intersubunit bridges in the 70S ribosome. The chain is Large ribosomal subunit protein uL14 from Prochlorococcus marinus (strain MIT 9303).